The following is a 143-amino-acid chain: FAD synthase (143 aa).

ATP-binding positions include 9–10 (TF), 14–17 (HPGH), and Asp-92.

This sequence belongs to the archaeal FAD synthase family. In terms of assembly, homodimer. Requires a divalent metal cation as cofactor.

It catalyses the reaction FMN + ATP + H(+) = FAD + diphosphate. Its pathway is cofactor biosynthesis; FAD biosynthesis; FAD from FMN: step 1/1. Its function is as follows. Catalyzes the transfer of the AMP portion of ATP to flavin mononucleotide (FMN) to produce flavin adenine dinucleotide (FAD) coenzyme. The protein is FAD synthase of Methanococcoides burtonii (strain DSM 6242 / NBRC 107633 / OCM 468 / ACE-M).